A 698-amino-acid chain; its full sequence is Ion-translocating oxidoreductase complex subunit C (698 aa).

4Fe-4S ferredoxin-type domains lie at 366-397 (TEMGLSEPEQSCIRCGLCVDACPAGLLPQQLY) and 407-436 (KARNHNLFDCIECGACAYVCPSNIPLVQYY). [4Fe-4S] cluster-binding residues include C377, C380, C383, C387, C416, C419, C422, and C426.

It belongs to the 4Fe4S bacterial-type ferredoxin family. RnfC subfamily. In terms of assembly, the complex is composed of six subunits: RnfA, RnfB, RnfC, RnfD, RnfE and RnfG. Requires [4Fe-4S] cluster as cofactor.

The protein resides in the cell inner membrane. In terms of biological role, part of a membrane-bound complex that couples electron transfer with translocation of ions across the membrane. This is Ion-translocating oxidoreductase complex subunit C from Yersinia pseudotuberculosis serotype O:1b (strain IP 31758).